We begin with the raw amino-acid sequence, 237 residues long: Glutathione S-transferase psoE (237 aa).

In terms of domain architecture, GST N-terminal spans 2 to 79 (VFGTLYTFPG…YITSQNEQTT (78 aa)). 6 residues coordinate glutathione: Arg-37, Lys-49, Val-50, Glu-63, Cys-64, and Asn-99. Lys-49 lines the substrate pocket. The GST C-terminal domain occupies 84–222 (DKKEYAEIIK…NNPPEKKPET (139 aa)). Gln-108 contributes to the substrate binding site. The segment covering 208 to 222 (EPKLTNNPPEKKPET) has biased composition (basic and acidic residues). The interval 208–237 (EPKLTNNPPEKKPETVPKNGAAVAIEATQA) is disordered.

Belongs to the GST superfamily. It depends on glutathione as a cofactor.

It participates in secondary metabolite biosynthesis. Functionally, glutathione S-transferase; part of the gene cluster that mediates the biosynthesis of pseurotin A, a competitive inhibitor of chitin synthase and an inducer of nerve-cell proliferation. The PKS-NRPS hybrid synthetase psoA is responsible for the biosynthesis of azaspirene, one of the first intermediates having the 1-oxa-7-azaspiro[4,4]-non-2-ene-4,6-dione core of pseurotin, via condensation of one acetyl-CoA, 4 malonyl-CoA, and a L-phenylalanine molecule. The dual-functional monooxygenase/methyltransferase psoF seems to be involved in the addition of the C3 methyl group onto the pseurotin scaffold. Azaspirene is then converted to synerazol through 4 steps including oxidation of C17 by the cytochrome P450 monooxygenase psoD, O-methylation of the hydroxy group of C8 by the methyltransferase psoC, and the trans-to-cis isomerization of the C13 olefin by the glutathione S-transferase psoE. The fourth step of synerazol production is performed by the dual-functional monooxygenase/methyltransferase psoF which seems to catalyze the epoxidation of the intermediate deepoxy-synerazol. Synerazol can be attacked by a water molecule nonenzymatically at two different positions to yield two diol products, pseurotin A and pseurotin D. The protein is Glutathione S-transferase psoE of Aspergillus fumigatus (strain ATCC MYA-4609 / CBS 101355 / FGSC A1100 / Af293) (Neosartorya fumigata).